A 72-amino-acid chain; its full sequence is Heat-stable enterotoxin ST-IA/ST-P (72 aa).

Positions 1–19 (MKKLMLAIFISVLSFPSFS) are cleaved as a signal peptide. Residues 20-54 (QSTESLDSSKEKITLETKKCDVVKNNSEKKSENMN) constitute a propeptide that is removed on maturation. Disulfide bonds link Cys-59/Cys-64, Cys-60/Cys-68, and Cys-63/Cys-71.

The protein belongs to the heat-stable enterotoxin family.

The protein localises to the secreted. In terms of biological role, toxin which activates the particulate form of guanylate cyclase and increases cyclic GMP levels within the host intestinal epithelial cells. The sequence is that of Heat-stable enterotoxin ST-IA/ST-P (sta1) from Escherichia coli.